We begin with the raw amino-acid sequence, 109 residues long: Peptide chaperone MftB (109 aa).

The protein belongs to the peptide chaperone MftB family. As to quaternary structure, interacts with MftA and MftC.

Its function is as follows. Peptide chaperone involved in the biosynthesis of the enzyme cofactor mycofactocin (MFT). Binds MftA and MftC with high affinity, and is essential for MftC activity on MftA, likely via the formation of a ternary complex. The polypeptide is Peptide chaperone MftB (Mycobacterium ulcerans (strain Agy99)).